Here is a 159-residue protein sequence, read N- to C-terminus: Lipoprotein signal peptidase (159 aa).

3 helical membrane-spanning segments follow: residues 4–24 (PYFVSITLFITIAVLILDQVT), 64–84 (MSFFFIVTIVVLGLLVFFYIK), and 88–108 (GNFLMQVAISLLFAGALGNFI). Catalysis depends on residues Asp118 and Asp136. Residues 131 to 151 (IFNGADSSLTIGVILVLIALL) form a helical membrane-spanning segment.

Belongs to the peptidase A8 family.

The protein resides in the cell membrane. It carries out the reaction Release of signal peptides from bacterial membrane prolipoproteins. Hydrolyzes -Xaa-Yaa-Zaa-|-(S,diacylglyceryl)Cys-, in which Xaa is hydrophobic (preferably Leu), and Yaa (Ala or Ser) and Zaa (Gly or Ala) have small, neutral side chains.. It functions in the pathway protein modification; lipoprotein biosynthesis (signal peptide cleavage). Its function is as follows. This protein specifically catalyzes the removal of signal peptides from prolipoproteins. The polypeptide is Lipoprotein signal peptidase (Staphylococcus carnosus (strain TM300)).